A 297-amino-acid polypeptide reads, in one-letter code: Urease accessory protein UreD (297 aa).

This sequence belongs to the UreD family. As to quaternary structure, ureD, UreF and UreG form a complex that acts as a GTP-hydrolysis-dependent molecular chaperone, activating the urease apoprotein by helping to assemble the nickel containing metallocenter of UreC. The UreE protein probably delivers the nickel.

It localises to the cytoplasm. Functionally, required for maturation of urease via the functional incorporation of the urease nickel metallocenter. The protein is Urease accessory protein UreD of Prochlorococcus marinus subsp. pastoris (strain CCMP1986 / NIES-2087 / MED4).